A 434-amino-acid polypeptide reads, in one-letter code: Serine--tRNA ligase (434 aa).

Residue 230–232 (TSE) coordinates L-serine. Residues 261-263 (RRE) and Val277 each bind ATP. Glu284 contributes to the L-serine binding site. Residue 348-351 (ELTS) participates in ATP binding. L-serine is bound at residue Thr393.

The protein belongs to the class-II aminoacyl-tRNA synthetase family. Type-1 seryl-tRNA synthetase subfamily. Homodimer. The tRNA molecule binds across the dimer.

The protein localises to the cytoplasm. It carries out the reaction tRNA(Ser) + L-serine + ATP = L-seryl-tRNA(Ser) + AMP + diphosphate + H(+). It catalyses the reaction tRNA(Sec) + L-serine + ATP = L-seryl-tRNA(Sec) + AMP + diphosphate + H(+). It functions in the pathway aminoacyl-tRNA biosynthesis; selenocysteinyl-tRNA(Sec) biosynthesis; L-seryl-tRNA(Sec) from L-serine and tRNA(Sec): step 1/1. Functionally, catalyzes the attachment of serine to tRNA(Ser). Is also able to aminoacylate tRNA(Sec) with serine, to form the misacylated tRNA L-seryl-tRNA(Sec), which will be further converted into selenocysteinyl-tRNA(Sec). This Kocuria rhizophila (strain ATCC 9341 / DSM 348 / NBRC 103217 / DC2201) protein is Serine--tRNA ligase.